The chain runs to 166 residues: V-type proton ATPase subunit c4 (166 aa).

Topologically, residues 1–13 (MASSGFSGDETAP) are lumenal. Residues 14–34 (FFGFLGAAAALVFSCMGAAYG) form a helical membrane-spanning segment. Topologically, residues 35-56 (TAKSGVGVASMGVMRPELVMKS) are cytoplasmic. A helical transmembrane segment spans residues 57–77 (IVPVVMAGVLGIYGLIIAVII). Topologically, residues 78-96 (STGINPKAKSYYLFDGYAH) are lumenal. Residues 97–118 (LSSGLACGLAGLSAGMAIGIVG) form a helical membrane-spanning segment. Residues 119–130 (DAGVRANAQQPK) are Cytoplasmic-facing. A helical transmembrane segment spans residues 131-156 (LFVGMILILIFAEALALYGLIVGIIL). The Lumenal segment spans residues 157 to 166 (SSRAGQSRAE).

This sequence belongs to the V-ATPase proteolipid subunit family. As to quaternary structure, V-ATPase is a heteromultimeric enzyme composed of a peripheral catalytic V1 complex (components A to H) attached to an integral membrane V0 proton pore complex (components: a, c, c'', d and e). The proteolipid components c and c'' are present as a hexameric ring that forms the proton-conducting pore. Interacts with APD2.

The protein resides in the vacuole membrane. Functionally, proton-conducting pore forming subunit of the membrane integral V0 complex of vacuolar ATPase. V-ATPase is responsible for acidifying a variety of intracellular compartments in eukaryotic cells. This chain is V-type proton ATPase subunit c4 (VHA-c4), found in Arabidopsis thaliana (Mouse-ear cress).